A 216-amino-acid chain; its full sequence is Sporozoite antigen (216 aa).

The segment at 194–216 (QQQQPSSYGAPPASSQQPSGFFW) is disordered.

The protein is Sporozoite antigen of Eimeria tenella (Coccidian parasite).